Reading from the N-terminus, the 550-residue chain is Formate--tetrahydrofolate ligase (550 aa).

60–67 (TPFGEGKT) is an ATP binding site.

Belongs to the formate--tetrahydrofolate ligase family.

The enzyme catalyses (6S)-5,6,7,8-tetrahydrofolate + formate + ATP = (6R)-10-formyltetrahydrofolate + ADP + phosphate. The protein operates within one-carbon metabolism; tetrahydrofolate interconversion. This Campylobacter curvus (strain 525.92) protein is Formate--tetrahydrofolate ligase.